The chain runs to 1117 residues: Mitochondrial protein cyt-4 (1117 aa).

Positions 561–916 (RQDFYTSTVY…LVHWQIQAAL (356 aa)) constitute an RNB domain. The disordered stretch occupies residues 705–730 (VVLEVGTPPSAEDEAPTRKMTKPDEL). Positions 719-730 (APTRKMTKPDEL) are enriched in basic and acidic residues.

Belongs to the RNR ribonuclease family. As to quaternary structure, homodimer.

It is found in the mitochondrion. Required for RNA 5'- and 3'-end processing and splicing. May act on the RNA processing enzymes directly, or it may act on other regulatory molecules, which influence the activity or synthesis of these enzymes. The sequence is that of Mitochondrial protein cyt-4 (cyt-4) from Neurospora crassa (strain ATCC 24698 / 74-OR23-1A / CBS 708.71 / DSM 1257 / FGSC 987).